Reading from the N-terminus, the 424-residue chain is Poly-cysteine and histidine-tailed protein (424 aa).

Residues 1–17 (MAFSTIVVLFVAAVGFG) form the signal peptide. The N-linked (GlcNAc...) asparagine glycan is linked to Asn291. The span at 372 to 390 (VGGKKQQKDQPESEKKAEN) shows a compositional bias: basic and acidic residues. A disordered region spans residues 372–424 (VGGKKQQKDQPESEKKAENMPETTGNASHHQHRHHHGDSSSESHEQHHHHHHH). N-linked (GlcNAc...) asparagine glycosylation occurs at Asn397.

Glycosylated. As to expression, expressed in larval tissues like cuticle, hypodermis and muscle (at protein level). Note=Not excreted into striated muscle fibers or nurse cell.

It is found in the secreted. Functionally, binds iron and zinc. May bind nickel. The sequence is that of Poly-cysteine and histidine-tailed protein from Trichinella spiralis (Trichina worm).